The following is a 234-amino-acid chain: Leucyl/phenylalanyl-tRNA--protein transferase (234 aa).

This sequence belongs to the L/F-transferase family.

The protein localises to the cytoplasm. The catalysed reaction is N-terminal L-lysyl-[protein] + L-leucyl-tRNA(Leu) = N-terminal L-leucyl-L-lysyl-[protein] + tRNA(Leu) + H(+). It carries out the reaction N-terminal L-arginyl-[protein] + L-leucyl-tRNA(Leu) = N-terminal L-leucyl-L-arginyl-[protein] + tRNA(Leu) + H(+). The enzyme catalyses L-phenylalanyl-tRNA(Phe) + an N-terminal L-alpha-aminoacyl-[protein] = an N-terminal L-phenylalanyl-L-alpha-aminoacyl-[protein] + tRNA(Phe). Functions in the N-end rule pathway of protein degradation where it conjugates Leu, Phe and, less efficiently, Met from aminoacyl-tRNAs to the N-termini of proteins containing an N-terminal arginine or lysine. The sequence is that of Leucyl/phenylalanyl-tRNA--protein transferase from Shigella boydii serotype 18 (strain CDC 3083-94 / BS512).